The primary structure comprises 98 residues: NADH-ubiquinone oxidoreductase chain 4L (98 aa).

Helical transmembrane passes span 1 to 21 (MTTM…GVYI), 29 to 49 (TLLC…LTLL), and 59 to 79 (FPLI…ALLV).

The protein belongs to the complex I subunit 4L family. Core subunit of respiratory chain NADH dehydrogenase (Complex I) which is composed of 45 different subunits.

Its subcellular location is the mitochondrion inner membrane. It catalyses the reaction a ubiquinone + NADH + 5 H(+)(in) = a ubiquinol + NAD(+) + 4 H(+)(out). In terms of biological role, core subunit of the mitochondrial membrane respiratory chain NADH dehydrogenase (Complex I) which catalyzes electron transfer from NADH through the respiratory chain, using ubiquinone as an electron acceptor. Part of the enzyme membrane arm which is embedded in the lipid bilayer and involved in proton translocation. The chain is NADH-ubiquinone oxidoreductase chain 4L (MT-ND4L) from Zaglossus bruijni (Western long-beaked echidna).